The sequence spans 350 residues: Phosphotriesterase-related protein (350 aa).

A divalent metal cation-binding residues include H22, H24, E169, H201, H230, and D298.

It belongs to the metallo-dependent hydrolases superfamily. Phosphotriesterase family. Requires a divalent metal cation as cofactor.

The chain is Phosphotriesterase-related protein from Drosophila grimshawi (Hawaiian fruit fly).